A 489-amino-acid polypeptide reads, in one-letter code: Transcription factor TGAL11 (489 aa).

The segment covering 87–99 (AATATATARPPAT) has biased composition (low complexity). The disordered stretch occupies residues 87-181 (AATATATARP…SDHRMTKTLD (95 aa)). Residues 121–139 (SNVTADTTDSESSSKNNGD) are compositionally biased toward polar residues. The span at 148-159 (ASQFDQIPQQQQ) shows a compositional bias: low complexity. A compositionally biased stretch (basic and acidic residues) spans 171–181 (HSDHRMTKTLD). In terms of domain architecture, bZIP spans 181-225 (DPKIMRRLAQNREAARKSRLRKKAYIQQLESSKLRLAQMEQDLER). A basic motif region spans residues 183–203 (KIMRRLAQNREAARKSRLRKK). The leucine-zipper stretch occupies residues 209–223 (LESSKLRLAQMEQDL). Residues 245-460 (AAMFDAEYGR…RALSSLWASR (216 aa)) form the DOG1 domain.

It belongs to the bZIP family.

It is found in the nucleus. In terms of biological role, transcriptional regulator involved in defense response. The sequence is that of Transcription factor TGAL11 from Oryza sativa subsp. japonica (Rice).